A 135-amino-acid polypeptide reads, in one-letter code: Small ribosomal subunit protein uS12 (135 aa).

Asp89 is modified (3-methylthioaspartic acid). Residues 108–135 are disordered; the sequence is NKRTVSRSKYGTKKAKATDKKATDNKKK. Over residues 111–122 the composition is skewed to basic residues; it reads TVSRSKYGTKKA. Positions 123–135 are enriched in basic and acidic residues; the sequence is KATDKKATDNKKK.

It belongs to the universal ribosomal protein uS12 family. Part of the 30S ribosomal subunit. Contacts proteins S8 and S17. May interact with IF1 in the 30S initiation complex.

In terms of biological role, with S4 and S5 plays an important role in translational accuracy. Functionally, interacts with and stabilizes bases of the 16S rRNA that are involved in tRNA selection in the A site and with the mRNA backbone. Located at the interface of the 30S and 50S subunits, it traverses the body of the 30S subunit contacting proteins on the other side and probably holding the rRNA structure together. The combined cluster of proteins S8, S12 and S17 appears to hold together the shoulder and platform of the 30S subunit. This chain is Small ribosomal subunit protein uS12, found in Helicobacter pylori (strain P12).